Here is a 324-residue protein sequence, read N- to C-terminus: Cytochrome c biogenesis protein CcsA (324 aa).

8 helical membrane-spanning segments follow: residues 15–35 (FSIV…DEII), 44–64 (GMIA…IYSG), 71–91 (LYES…VPYF), 98–118 (LSTI…SGLL), 143–163 (MILG…LLVL), 228–248 (VISL…VWAN), 255–275 (WNWD…AVYL), and 289–309 (AIVA…VNLL).

It belongs to the CcmF/CycK/Ccl1/NrfE/CcsA family. As to quaternary structure, may interact with Ccs1.

It is found in the plastid. Its subcellular location is the chloroplast thylakoid membrane. Functionally, required during biogenesis of c-type cytochromes (cytochrome c6 and cytochrome f) at the step of heme attachment. This Daucus carota (Wild carrot) protein is Cytochrome c biogenesis protein CcsA.